The primary structure comprises 89 residues: MTELSKPLRRTLVGRVVSDKMQKTVTVLVERQVKHPVIGKYVGQSKKYHAHDEAGTYKMGDTVEIAESKPISRTKSWVVTRLVEASKGI.

The protein belongs to the universal ribosomal protein uS17 family. As to quaternary structure, part of the 30S ribosomal subunit.

Its function is as follows. One of the primary rRNA binding proteins, it binds specifically to the 5'-end of 16S ribosomal RNA. In Polynucleobacter asymbioticus (strain DSM 18221 / CIP 109841 / QLW-P1DMWA-1) (Polynucleobacter necessarius subsp. asymbioticus), this protein is Small ribosomal subunit protein uS17.